The sequence spans 308 residues: Sulfate adenylyltransferase subunit 2 (308 aa).

This sequence belongs to the PAPS reductase family. CysD subfamily. As to quaternary structure, heterodimer composed of CysD, the smaller subunit, and CysN.

The catalysed reaction is sulfate + ATP + H(+) = adenosine 5'-phosphosulfate + diphosphate. Its pathway is sulfur metabolism; hydrogen sulfide biosynthesis; sulfite from sulfate: step 1/3. Functionally, with CysN forms the ATP sulfurylase (ATPS) that catalyzes the adenylation of sulfate producing adenosine 5'-phosphosulfate (APS) and diphosphate, the first enzymatic step in sulfur assimilation pathway. APS synthesis involves the formation of a high-energy phosphoric-sulfuric acid anhydride bond driven by GTP hydrolysis by CysN coupled to ATP hydrolysis by CysD. This Chromobacterium violaceum (strain ATCC 12472 / DSM 30191 / JCM 1249 / CCUG 213 / NBRC 12614 / NCIMB 9131 / NCTC 9757 / MK) protein is Sulfate adenylyltransferase subunit 2.